The sequence spans 278 residues: Biotin synthase (278 aa).

One can recognise a Radical SAM core domain in the interval 1–227 (MQIMLCAISN…NAHIMVAGGR (227 aa)). The [4Fe-4S] cluster site is built by C16, C20, and C23. Residues C60, C95, and C153 each coordinate [2Fe-2S] cluster.

It belongs to the radical SAM superfamily. Biotin synthase family. In terms of assembly, homodimer. It depends on [4Fe-4S] cluster as a cofactor. The cofactor is [2Fe-2S] cluster.

It catalyses the reaction (4R,5S)-dethiobiotin + (sulfur carrier)-SH + 2 reduced [2Fe-2S]-[ferredoxin] + 2 S-adenosyl-L-methionine = (sulfur carrier)-H + biotin + 2 5'-deoxyadenosine + 2 L-methionine + 2 oxidized [2Fe-2S]-[ferredoxin]. It participates in cofactor biosynthesis; biotin biosynthesis; biotin from 7,8-diaminononanoate: step 2/2. Functionally, catalyzes the conversion of dethiobiotin (DTB) to biotin by the insertion of a sulfur atom into dethiobiotin via a radical-based mechanism. This Campylobacter lari (strain RM2100 / D67 / ATCC BAA-1060) protein is Biotin synthase.